Reading from the N-terminus, the 1426-residue chain is MHSSNPKVRSSPSGNTQSSPKSKQEVMVRPPTVMSPSGNPQLDSKFSNQGKQGGSASQSQPSPCDSKSGGHTPKALPGPGGSMGLKNGAGNGAKGKGKRERSISADSFDQRDPGTPNDDSDIKECNSADHIKSQDSQHTPHSMTPSNATAPRSSTPSHGQTTATEPTPAQKTPAKVVYVFSTEMANKAAEAVLKGQVETIVSFHIQNISNNKTERSTAPLNTQISALRNDPKPLPQQPPAPANQDQNSSQNTRLQPTPPIPAPAPKPAAPPRPLDRESPGVENKLIPSVGSPASSTPLPPDGTGPNSTPNNRAVTPVSQGSNSSSADPKAPPPPPVSSGEPPTLGENPDGLSQEQLEHRERSLQTLRDIQRMLFPDEKEFTGAQSGGPQQNPGVLDGPQKKPEGPIQAMMAQSQSLGKGPGPRTDVGAPFGPQGHRDVPFSPDEMVPPSMNSQSGTIGPDHLDHMTPEQIAWLKLQQEFYEEKRRKQEQVVVQQCSLQDMMVHQHGPRGVVRGPPPPYQMTPSEGWAPGGTEPFSDGINMPHSLPPRGMAPHPNMPGSQMRLPGFAGMINSEMEGPNVPNPASRPGLSGVSWPDDVPKIPDGRNFPPGQGIFSGPGRGERFPNPQGLSEEMFQQQLAEKQLGLPPGMAMEGIRPSMEMNRMIPGSQRHMEPGNNPIFPRIPVEGPLSPSRGDFPKGIPPQMGPGRELEFGMVPSGMKGDVNLNVNMGSNSQMIPQKMREAGAGPEEMLKLRPGGSDMLPAQQKMVPLPFGEHPQQEYGMGPRPFLPMSQGPGSNSGLRNLREPIGPDQRTNSRLSHMPPLPLNPSSNPTSLNTAPPVQRGLGRKPLDISVAGSQVHSPGINPLKSPTMHQVQSPMLGSPSGNLKSPQTPSQLAGMLAGPAAAASIKSPPVLGSAAASPVHLKSPSLPAPSPGWTSSPKPPLQSPGIPPNHKAPLTMASPAMLGNVESGGPPPPTASQPASVNIPGSLPSSTPYTMPPEPTLSQNPLSIMMSRMSKFAMPSSTPLYHDAIKTVASSDDDSPPARSPNLPSMNNMPGMGINTQNPRISGPNPVVPMPTLSPMGMTQPLSHSNQMPSPNAVGPNIPPHGVPMGPGLMSHNPIMGHGSQEPPMVPQGRMGFPQGFPPVQSPPQQVPFPHNGPSGGQGSFPGGMGFPGEGPLGRPSNLPQSSADAALCKPGGPGGPDSFTVLGNSMPSVFTDPDLQEVIRPGATGIPEFDLSRIIPSEKPSQTLQYFPRGEVPGRKQPQGPGPGFSHMQGMMGEQAPRMGLALPGMGGPGPVGTPDIPLGTAPSMPGHNPMRPPAFLQQGMMGPHHRMMSPAQSTMPGQPTLMSNPAAAVGMIPGKDRGPAGLYTHPGPVGSPGMMMSMQGMMGPQQNIMIPPQMRPRGMAADVGMGGFSQGPGNPGNMMF.

Polar residues-rich tracts occupy residues 1-21 (MHSSNPKVRSSPSGNTQSSPK) and 34-46 (MSPSGNPQLDSKF). The tract at residues 1 to 173 (MHSSNPKVRS…TEPTPAQKTP (173 aa)) is disordered. Residues 47 to 62 (SNQGKQGGSASQSQPS) show a composition bias toward low complexity. Over residues 78 to 94 (GPGGSMGLKNGAGNGAK) the composition is skewed to gly residues. 2 stretches are compositionally biased toward basic and acidic residues: residues 100 to 112 (ERSISADSFDQRD) and 120 to 135 (SDIKECNSADHIKSQD). Position 104 is a phosphoserine (serine 104). Residues 136–170 (SQHTPHSMTPSNATAPRSSTPSHGQTTATEPTPAQ) show a composition bias toward polar residues. Phosphoserine is present on serine 157. Residue threonine 172 is modified to Phosphothreonine. The interaction with PYGO1 stretch occupies residues 177-205 (VYVFSTEMANKAAEAVLKGQVETIVSFHI). Over residues 207–226 (NISNNKTERSTAPLNTQISA) the composition is skewed to polar residues. Disordered stretches follow at residues 207 to 439 (NISN…RDVP) and 597 to 625 (PKIPDGRNFPPGQGIFSGPGRGERFPNPQ). Composition is skewed to pro residues over residues 232-241 (KPLPQQPPAP) and 256-272 (PTPPIPAPAPKPAAPPR). Residues 304-320 (GPNSTPNNRAVTPVSQG) are compositionally biased toward polar residues. At threonine 315 the chain carries Phosphothreonine. A phosphoserine mark is found at serine 318 and serine 352. A compositionally biased stretch (basic and acidic residues) spans 355–380 (QLEHRERSLQTLRDIQRMLFPDEKEF). Residues 358–374 (HRERSLQTLRDIQRMLF) form an interaction with CTNNB1 region. The segment covering 382 to 392 (GAQSGGPQQNP) has biased composition (polar residues). Phosphoserine occurs at positions 687 and 689. The segment at 787–895 (MSQGPGSNSG…PQTPSQLAGM (109 aa)) is disordered. Arginine 801 is modified (asymmetric dimethylarginine). Residues 823–836 (NPSSNPTSLNTAPP) are compositionally biased toward low complexity. Position 844 is an N6-acetyllysine (lysine 844). Polar residues predominate over residues 867–891 (TMHQVQSPMLGSPSGNLKSPQTPSQ). Residues serine 907 and serine 917 each carry the phosphoserine modification. Disordered stretches follow at residues 910 to 1002 (VLGS…PTLS), 1032 to 1052 (VASSDDDSPPARSPNLPSMNN), 1152 to 1203 (PFPH…GPDS), and 1253 to 1275 (PRGEVPGRKQPQGPGPGFSHMQG). The span at 937–947 (PKPPLQSPGIP) shows a compositional bias: pro residues. The span at 1158 to 1176 (PSGGQGSFPGGMGFPGEGP) shows a compositional bias: gly residues.

The protein belongs to the BCL9 family. As to quaternary structure, binds to beta-catenin (CTNNB1), PYGO1 and PYGO2; the interaction with PYGO1 increases PYGO1 affinity to histone H3 methylated at 'Lys 4'. In terms of tissue distribution, detected at low levels in thymus, prostate, testis, ovary and small intestine, and at lower levels in spleen, colon and blood.

The protein resides in the nucleus. In terms of biological role, involved in signal transduction through the Wnt pathway. Promotes beta-catenin's transcriptional activity. The chain is B-cell CLL/lymphoma 9 protein (BCL9) from Homo sapiens (Human).